A 500-amino-acid chain; its full sequence is Na(+)/H(+) antiporter NhaB (500 aa).

The next 13 membrane-spanning stretches (helical) occupy residues 11 to 31, 34 to 54, 58 to 78, 96 to 116, 121 to 141, 145 to 165, 205 to 225, 241 to 261, 311 to 331, 350 to 370, 394 to 414, 450 to 470, and 477 to 497; these read HGFLGQSPLWYKAVICLFLVL, LLLATIGPAAAGWALVIEFIF, MALKCYPLMPGGLLLIEALLL, VILLLMFMVAGIHFMKELLLF, ILLGVRSKAMLSLLFCVLSAF, FLDALTVTAVIISAAVGFYAV, LLMHGAVGTALGGVCTLVGEP, FLLKVAPVSIPVLGAGLLTCV, ILIICLGLHVAEVGLIGLMVI, FQDAMPFTSLLVVFFAVVAVI, MLYLANGLLSAISDNVFVATI, ATPNGQAAFLFLLTSAIAPLI, and MVWMALPYTVVMGGLGWWAVT.

This sequence belongs to the NhaB Na(+)/H(+) (TC 2.A.34) antiporter family.

The protein localises to the cell inner membrane. The catalysed reaction is 2 Na(+)(in) + 3 H(+)(out) = 2 Na(+)(out) + 3 H(+)(in). Its function is as follows. Na(+)/H(+) antiporter that extrudes sodium in exchange for external protons. The protein is Na(+)/H(+) antiporter NhaB of Pseudomonas putida (strain ATCC 700007 / DSM 6899 / JCM 31910 / BCRC 17059 / LMG 24140 / F1).